The chain runs to 185 residues: Peptidyl-tRNA hydrolase (185 aa).

Y14 is a binding site for tRNA. Catalysis depends on H19, which acts as the Proton acceptor. TRNA-binding residues include Y65, N67, and N113.

It belongs to the PTH family. Monomer.

The protein localises to the cytoplasm. The enzyme catalyses an N-acyl-L-alpha-aminoacyl-tRNA + H2O = an N-acyl-L-amino acid + a tRNA + H(+). Hydrolyzes ribosome-free peptidyl-tRNAs (with 1 or more amino acids incorporated), which drop off the ribosome during protein synthesis, or as a result of ribosome stalling. In terms of biological role, catalyzes the release of premature peptidyl moieties from peptidyl-tRNA molecules trapped in stalled 50S ribosomal subunits, and thus maintains levels of free tRNAs and 50S ribosomes. The sequence is that of Peptidyl-tRNA hydrolase from Rickettsia akari (strain Hartford).